A 268-amino-acid polypeptide reads, in one-letter code: Tryptophan synthase alpha chain (268 aa).

Catalysis depends on proton acceptor residues glutamate 49 and aspartate 60.

The protein belongs to the TrpA family. Tetramer of two alpha and two beta chains.

The catalysed reaction is (1S,2R)-1-C-(indol-3-yl)glycerol 3-phosphate + L-serine = D-glyceraldehyde 3-phosphate + L-tryptophan + H2O. The protein operates within amino-acid biosynthesis; L-tryptophan biosynthesis; L-tryptophan from chorismate: step 5/5. The alpha subunit is responsible for the aldol cleavage of indoleglycerol phosphate to indole and glyceraldehyde 3-phosphate. This Pseudomonas aeruginosa (strain LESB58) protein is Tryptophan synthase alpha chain.